A 259-amino-acid polypeptide reads, in one-letter code: 7-cyano-7-deazaguanine synthase (259 aa).

32–42 (LSGGLDSVTCL) contacts ATP. Positions 223, 233, 236, and 239 each coordinate Zn(2+).

It belongs to the QueC family. Zn(2+) is required as a cofactor.

The enzyme catalyses 7-carboxy-7-deazaguanine + NH4(+) + ATP = 7-cyano-7-deazaguanine + ADP + phosphate + H2O + H(+). The protein operates within purine metabolism; 7-cyano-7-deazaguanine biosynthesis. Its function is as follows. Catalyzes the ATP-dependent conversion of 7-carboxy-7-deazaguanine (CDG) to 7-cyano-7-deazaguanine (preQ(0)). The polypeptide is 7-cyano-7-deazaguanine synthase (Psychrobacter cryohalolentis (strain ATCC BAA-1226 / DSM 17306 / VKM B-2378 / K5)).